We begin with the raw amino-acid sequence, 268 residues long: Eukaryotic translation initiation factor 3 subunit J (268 aa).

Disordered regions lie at residues 1–117 (MTPS…DLKH) and 219–242 (NEKMREERAADKGSKKSKAAKTKV). Acidic residues predominate over residues 26–44 (DEEDEEVLDSWDAAEDSEV). Residues 40–95 (EDSEVEREKAAKAAEAKAKAEAEAAAKKKSKAQRIEEHKAERRKNAEADSEEDEDE) adopt a coiled-coil conformation. Basic and acidic residues-rich tracts occupy residues 45-65 (EREKAAKAAEAKAKAEAEAAA) and 72-86 (QRIEEHKAERRKNAE). Positions 87 to 99 (ADSEEDEDEDEDE) are enriched in acidic residues. 2 stretches are compositionally biased toward basic and acidic residues: residues 100-117 (AEKRARLRRTEKDSDLKH) and 220-232 (EKMREERAADKGS).

It belongs to the eIF-3 subunit J family. In terms of assembly, component of the eukaryotic translation initiation factor 3 (eIF-3) complex.

It localises to the cytoplasm. Functionally, component of the eukaryotic translation initiation factor 3 (eIF-3) complex, which is involved in protein synthesis of a specialized repertoire of mRNAs and, together with other initiation factors, stimulates binding of mRNA and methionyl-tRNAi to the 40S ribosome. The eIF-3 complex specifically targets and initiates translation of a subset of mRNAs involved in cell proliferation. In Aspergillus clavatus (strain ATCC 1007 / CBS 513.65 / DSM 816 / NCTC 3887 / NRRL 1 / QM 1276 / 107), this protein is Eukaryotic translation initiation factor 3 subunit J (hcr1).